Consider the following 475-residue polypeptide: Cytochrome P450 monooxygenase sthD (475 aa).

The signal sequence occupies residues 1-17 (MAAYFLLGLYGSTLVYR). A helical transmembrane segment spans residues 276–296 (FIIIAGSDTVAATLTFAFFYL). Residue asparagine 336 is glycosylated (N-linked (GlcNAc...) asparagine). Heme is bound at residue cysteine 418.

Belongs to the cytochrome P450 family. Heme is required as a cofactor.

Its subcellular location is the membrane. The enzyme catalyses betaenone A + NADPH + O2 + H(+) = stemphyloxin II + NADP(+) + H2O. It carries out the reaction betaenone C + NADPH + O2 + H(+) = stemphyloxin I + NADP(+) + H2O. Its pathway is mycotoxin biosynthesis. Its function is as follows. Cytochrome P450 monooxygenase; part of the gene cluster that mediates the biosynthesis of the phytotoxin stemphyloxin II. The first step of the pathway is the synthesis of dehydroprobetaenone I by the polyketide synthase sthA and the enoyl reductase sthE via condensation of one acetyl-CoA starter unit with 7 malonyl-CoA units and 5 methylations. The C-terminal reductase (R) domain of sthA catalyzes the reductive release of the polyketide chain. Because sthA lacks a designated enoylreductase (ER) domain, the required activity is provided the enoyl reductase sthE. The short-chain dehydrogenase/reductase sthC then catalyzes reduction of dehydroprobetaenone I to probetaenone I. The cytochrome P450 monooxygenase sthF catalyzes successive epoxidation, oxidation (resulting from epoxide opening) and hydroxylation to install a tertiary alcohol in the decaline ring to yield betaenone C from dehydroprobetaenone I and betaenone B from probetaenone I. The FAD-linked oxidoreductase sthB is responsible for the conversion of betaenone C to betaenone A via an intramolecular aldol reaction between C-1 and C-17 to form the bridged tricyclic system in betaenone A. Finally, the cytochrome P450 monooxygenase sthD catalyzes the hydroxylation of C-15 to afford the final metabolite stemphyloxin II. The polypeptide is Cytochrome P450 monooxygenase sthD (Phaeosphaeria nodorum (strain SN15 / ATCC MYA-4574 / FGSC 10173) (Glume blotch fungus)).